Reading from the N-terminus, the 330-residue chain is Protein RecA (330 aa).

66-73 (GPESSGKT) is a binding site for ATP.

The protein belongs to the RecA family.

The protein localises to the cytoplasm. Its function is as follows. Can catalyze the hydrolysis of ATP in the presence of single-stranded DNA, the ATP-dependent uptake of single-stranded DNA by duplex DNA, and the ATP-dependent hybridization of homologous single-stranded DNAs. It interacts with LexA causing its activation and leading to its autocatalytic cleavage. The chain is Protein RecA from Bacteroides thetaiotaomicron (strain ATCC 29148 / DSM 2079 / JCM 5827 / CCUG 10774 / NCTC 10582 / VPI-5482 / E50).